A 71-amino-acid chain; its full sequence is IRCFITPDITSKDCPNGHVCYTKTWCDGFCSIRGKRVDLGCAATCPTVRTGVDIQCCSTDDCDPFPTRKRP.

5 disulfide bridges follow: Cys3-Cys20, Cys14-Cys41, Cys26-Cys30, Cys45-Cys56, and Cys57-Cys62.

The protein belongs to the three-finger toxin family. Long-chain subfamily. Type II alpha-neurotoxin sub-subfamily. Expressed by the venom gland.

It localises to the secreted. Its function is as follows. Binds with high affinity to muscular (alpha-1/CHRNA1) and neuronal (alpha-7/CHRNA7) nicotinic acetylcholine receptor (nAChR) and inhibits acetylcholine from binding to the receptor, thereby impairing neuromuscular and neuronal transmission. The protein is Long neurotoxin 1 of Naja naja (Indian cobra).